A 434-amino-acid chain; its full sequence is Enolase (434 aa).

Gln-167 is a binding site for (2R)-2-phosphoglycerate. Glu-209 (proton donor) is an active-site residue. Positions 246, 291, and 318 each coordinate Mg(2+). 4 residues coordinate (2R)-2-phosphoglycerate: Lys-343, Arg-372, Ser-373, and Lys-394. The active-site Proton acceptor is the Lys-343.

The protein belongs to the enolase family. Component of the RNA degradosome, a multiprotein complex involved in RNA processing and mRNA degradation. Mg(2+) serves as cofactor.

It localises to the cytoplasm. It is found in the secreted. The protein localises to the cell surface. It carries out the reaction (2R)-2-phosphoglycerate = phosphoenolpyruvate + H2O. Its pathway is carbohydrate degradation; glycolysis; pyruvate from D-glyceraldehyde 3-phosphate: step 4/5. Functionally, catalyzes the reversible conversion of 2-phosphoglycerate (2-PG) into phosphoenolpyruvate (PEP). It is essential for the degradation of carbohydrates via glycolysis. This chain is Enolase, found in Buchnera aphidicola subsp. Schizaphis graminum (strain Sg).